We begin with the raw amino-acid sequence, 244 residues long: Phosphoadenosine 5'-phosphosulfate reductase (244 aa).

The active-site Nucleophile; cysteine thiosulfonate intermediate is C239.

The protein belongs to the PAPS reductase family. CysH subfamily.

Its subcellular location is the cytoplasm. The enzyme catalyses [thioredoxin]-disulfide + sulfite + adenosine 3',5'-bisphosphate + 2 H(+) = [thioredoxin]-dithiol + 3'-phosphoadenylyl sulfate. It functions in the pathway sulfur metabolism; hydrogen sulfide biosynthesis; sulfite from sulfate: step 3/3. In terms of biological role, catalyzes the formation of sulfite from phosphoadenosine 5'-phosphosulfate (PAPS) using thioredoxin as an electron donor. The polypeptide is Phosphoadenosine 5'-phosphosulfate reductase (Escherichia coli O157:H7).